The chain runs to 352 residues: Protein MGF 360-16R (352 aa).

The protein belongs to the asfivirus MGF 360 family.

In terms of biological role, plays a role in virus cell tropism, and may be required for efficient virus replication in macrophages. The protein is Protein MGF 360-16R of African swine fever virus (isolate Tick/South Africa/Pretoriuskop Pr4/1996) (ASFV).